The primary structure comprises 225 residues: MNPIICALDTQDLNEAISLANTLRDKVGMIKLGLEFFAAHGPSGVREVAKCNVPTFLDLKLHDIPNTVAKTVEAIKVLNIEILTLHISGGTKMLEEALSIVKDTKTKLIGVTVLTSMSNEDLSELGIAREVKSQVILFAKLAKKVGLHGIVCSALEAQEVYQECGKDFKIITSGIRVGFGHDDQKRTATPKEAINSGADYIVIGRPITKSNSPANSAELILKSLS.

Substrate-binding positions include aspartate 9, lysine 31, 58 to 67 (DLKLHDIPNT), threonine 115, arginine 176, glutamine 184, glycine 204, and arginine 205. The Proton donor role is filled by lysine 60.

This sequence belongs to the OMP decarboxylase family. Type 1 subfamily. Homodimer.

The catalysed reaction is orotidine 5'-phosphate + H(+) = UMP + CO2. Its pathway is pyrimidine metabolism; UMP biosynthesis via de novo pathway; UMP from orotate: step 2/2. In terms of biological role, catalyzes the decarboxylation of orotidine 5'-monophosphate (OMP) to uridine 5'-monophosphate (UMP). This Wolbachia sp. subsp. Brugia malayi (strain TRS) protein is Orotidine 5'-phosphate decarboxylase.